The chain runs to 148 residues: Large ribosomal subunit protein bL9 (148 aa).

The protein belongs to the bacterial ribosomal protein bL9 family.

In terms of biological role, binds to the 23S rRNA. The protein is Large ribosomal subunit protein bL9 of Desulfitobacterium hafniense (strain DSM 10664 / DCB-2).